A 394-amino-acid polypeptide reads, in one-letter code: Elongation factor Tu (394 aa).

The tr-type G domain occupies 10–204 (KPHINVGTIG…YLDTYIPEPK (195 aa)). The segment at 19-26 (GHVDHGKT) is G1. Residue 19–26 (GHVDHGKT) participates in GTP binding. Mg(2+) is bound at residue Thr26. A G2 region spans residues 60–64 (GITIN). A G3 region spans residues 81-84 (DCPG). GTP-binding positions include 81 to 85 (DCPGH) and 136 to 139 (NKCD). The interval 136–139 (NKCD) is G4. A G5 region spans residues 174–176 (SAL).

This sequence belongs to the TRAFAC class translation factor GTPase superfamily. Classic translation factor GTPase family. EF-Tu/EF-1A subfamily. As to quaternary structure, monomer.

Its subcellular location is the cytoplasm. It carries out the reaction GTP + H2O = GDP + phosphate + H(+). Its function is as follows. GTP hydrolase that promotes the GTP-dependent binding of aminoacyl-tRNA to the A-site of ribosomes during protein biosynthesis. This Buchnera aphidicola subsp. Baizongia pistaciae (strain Bp) protein is Elongation factor Tu.